Reading from the N-terminus, the 603-residue chain is Carbon catabolite repressor protein 4 homolog 2 (603 aa).

The tract at residues 115 to 136 is disordered; it reads ENNANEDDDLNRNNSAGSGSLA. The segment covering 126 to 136 has biased composition (low complexity); sequence RNNSAGSGSLA. Position 302 (E302) interacts with Mg(2+).

It belongs to the CCR4/nocturin family. In terms of assembly, component of the CCR4-NOT complex, at least composed of CRR4 and CAF1 proteins. Mg(2+) serves as cofactor.

The protein resides in the nucleus. The protein localises to the cytoplasm. The catalysed reaction is Exonucleolytic cleavage of poly(A) to 5'-AMP.. In terms of biological role, acts as a catalytic component of the CCR4-NOT core complex, which in the nucleus seems to be a general transcription factor, and in the cytoplasm the major mRNA deadenylase involved in mRNA turnover. The protein is Carbon catabolite repressor protein 4 homolog 2 (CCR4-2) of Arabidopsis thaliana (Mouse-ear cress).